We begin with the raw amino-acid sequence, 695 residues long: Polyribonucleotide nucleotidyltransferase (695 aa).

Mg(2+)-binding residues include Asp-488 and Asp-494. Residues 554 to 613 (PKTTIIKIKTDKIRDLIGRGGETIKGIISTSCASIDVDDSGNVNIFSNNQKSFDTAVQMV) form the KH domain. The 68-residue stretch at 623-690 (NKVYTGKVVK…DRGRIKLSRK (68 aa)) folds into the S1 motif domain.

The protein belongs to the polyribonucleotide nucleotidyltransferase family. As to quaternary structure, component of the RNA degradosome, which is a multiprotein complex involved in RNA processing and mRNA degradation. Mg(2+) is required as a cofactor.

The protein localises to the cytoplasm. The enzyme catalyses RNA(n+1) + phosphate = RNA(n) + a ribonucleoside 5'-diphosphate. Its function is as follows. Involved in mRNA degradation. Catalyzes the phosphorolysis of single-stranded polyribonucleotides processively in the 3'- to 5'-direction. The sequence is that of Polyribonucleotide nucleotidyltransferase from Vesicomyosocius okutanii subsp. Calyptogena okutanii (strain HA).